A 789-amino-acid chain; its full sequence is 1-phosphatidylinositol 4,5-bisphosphate phosphodiesterase delta-3 (789 aa).

Residues 63-172 form the PH domain; that stretch reads RAMLRGSRLR…WVRGLTKLRA (110 aa). The interval 73 to 101 is substrate binding; it reads KIRSRTWHKERLYRLQEDGLSVWFQRRIP. Phosphoserine is present on Ser-105. 3 EF-hand domains span residues 182–217, 218–253, and 250–285; these read RLDHWIHSYLHRADSNQDSKMSFKEIKSLLRMVNVD, MNDMYAYLLFKECDHSNNDRLEGAEIEEFLRRLLKR, and LLKRPELEEIFHQYSGEDRVLSAPELLEFLEDQGEE. Asp-195, Asn-197, Asp-199, Lys-201, Glu-206, Asp-231, Ser-233, Asn-235, Arg-237, and Glu-242 together coordinate Ca(2+). The PI-PLC X-box domain maps to 337-482; it reads QDMNQPLAHY…LKGRVLVKGK (146 aa). His-352 is an active-site residue. Asn-353, Glu-382, and Asp-384 together coordinate Ca(2+). The active site involves His-397. Residue Glu-431 participates in Ca(2+) binding. The segment at 461–519 is disordered; that stretch reads SPNPEELPSPEQLKGRVLVKGKKLPAARSEDGRALSDREEEEEDDEEEEEEVEAAAQRR. Residues Lys-480 and Lys-482 each contribute to the substrate site. A compositionally biased stretch (basic and acidic residues) spans 488–497; sequence RSEDGRALSD. At Ser-496 the chain carries Phosphoserine. Acidic residues predominate over residues 498 to 513; sequence REEEEEDDEEEEEEVE. A PI-PLC Y-box domain is found at 528 to 644; the sequence is LSALAVYCHA…GYVLKPACLR (117 aa). Substrate is bound at residue Ser-557. Phosphoserine is present on Ser-573. Arg-584 contacts substrate. A C2 domain is found at 644-769; it reads RQPDSTFDPE…QGYRHIHLLS (126 aa). Ile-683, Asp-685, Asn-709, Asp-738, Tyr-739, and Asp-740 together coordinate Ca(2+).

The cofactor is Ca(2+). Present in corneal epithelial cells (at protein level).

It is found in the membrane. The protein resides in the cytoplasm. The protein localises to the cleavage furrow. It catalyses the reaction a 1,2-diacyl-sn-glycero-3-phospho-(1D-myo-inositol-4,5-bisphosphate) + H2O = 1D-myo-inositol 1,4,5-trisphosphate + a 1,2-diacyl-sn-glycerol + H(+). Strongly activated by phosphatidic acid. Inhibited by phosphatidylethanolamine (PtdEtn), phosphatidylcholine (PtdCho), sphingomyelin and phosphatidylserine (PtdSer). Its function is as follows. Hydrolyzes the phosphatidylinositol 4,5-bisphosphate (PIP2) to generate 2 second messenger molecules diacylglycerol (DAG) and inositol 1,4,5-trisphosphate (IP3). DAG mediates the activation of protein kinase C (PKC), while IP3 releases Ca(2+) from intracellular stores. Essential for trophoblast and placental development. May participate in cytokinesis by hydrolyzing PIP2 at the cleavage furrow. Regulates neurite outgrowth through the inhibition of RhoA/Rho kinase signaling. This is 1-phosphatidylinositol 4,5-bisphosphate phosphodiesterase delta-3 from Homo sapiens (Human).